An 88-amino-acid chain; its full sequence is Acylphosphatase (88 aa).

One can recognise an Acylphosphatase-like domain in the interval 3-88; that stretch reads AVDVLISGRV…RAGHQGFEVR (86 aa). Residues arginine 18 and asparagine 36 contribute to the active site.

The protein belongs to the acylphosphatase family.

It catalyses the reaction an acyl phosphate + H2O = a carboxylate + phosphate + H(+). This Methanocella arvoryzae (strain DSM 22066 / NBRC 105507 / MRE50) protein is Acylphosphatase (acyP).